The chain runs to 475 residues: Ankyrin repeat, SAM and basic leucine zipper domain-containing protein 1 (475 aa).

Positions Met-1–Trp-25 are disordered. Phosphoserine occurs at positions 17, 18, and 20. 6 ANK repeats span residues Glu-45–Ser-74, Tyr-78–Phe-107, Asp-110–Thr-144, Arg-148–Ala-177, Asn-181–Leu-210, and Asp-214–Gly-243. The region spanning Pro-272–Glu-334 is the SAM domain.

Interacts with DDX4, PIWIL1, RANBP9 and TDRD1. Expressed exclusively in testis and ovary with higher levels in testis.

The protein resides in the cytoplasm. Its function is as follows. Plays a central role during spermatogenesis by repressing transposable elements and preventing their mobilization, which is essential for the germline integrity. Acts via the piRNA metabolic process, which mediates the repression of transposable elements during meiosis by forming complexes composed of piRNAs and Piwi proteins and governs the methylation and subsequent repression of transposons. Its association with pi-bodies suggests a participation in the primary piRNAs metabolic process. Required prior to the pachytene stage to facilitate the production of multiple types of piRNAs, including those associated with repeats involved in regulation of retrotransposons. May act by mediating protein-protein interactions during germ cell maturation. The protein is Ankyrin repeat, SAM and basic leucine zipper domain-containing protein 1 of Mus musculus (Mouse).